Reading from the N-terminus, the 106-residue chain is Nucleoid-associated protein Nham_0463 (106 aa).

It belongs to the YbaB/EbfC family. Homodimer.

Its subcellular location is the cytoplasm. It is found in the nucleoid. Binds to DNA and alters its conformation. May be involved in regulation of gene expression, nucleoid organization and DNA protection. This is Nucleoid-associated protein Nham_0463 from Nitrobacter hamburgensis (strain DSM 10229 / NCIMB 13809 / X14).